The chain runs to 152 residues: Ribosome maturation factor RimP (152 aa).

This sequence belongs to the RimP family.

The protein resides in the cytoplasm. In terms of biological role, required for maturation of 30S ribosomal subunits. In Burkholderia ambifaria (strain MC40-6), this protein is Ribosome maturation factor RimP.